We begin with the raw amino-acid sequence, 249 residues long: MGQKIHPYGLRLGITSEWRSRWYADKQYADYLAEDIKIRDFLSKGLERAGIADVVIERTRDRVRVDIHTARPGIVIGRRGAEADRIRGKLEKLTGKQVQLNILEVKNVDASAQLVAQSIAEQLSNRVAFRRAMRKAIQGAMRQPQVKGIKVVCSGRLGGAEMGRTERYHEGRVPLHTLRAEIDYGTFEAHTTFGRIGVKVWIYKGDVVGGRRESLINARDDRGSRRGRNDRPRRGGGRRRRAAEQKQEG.

In terms of domain architecture, KH type-2 spans 38 to 106; sequence IRDFLSKGLE…QVQLNILEVK (69 aa). Positions 218–233 are enriched in basic and acidic residues; it reads ARDDRGSRRGRNDRPR. Residues 218-249 form a disordered region; it reads ARDDRGSRRGRNDRPRRGGGRRRRAAEQKQEG.

The protein belongs to the universal ribosomal protein uS3 family. As to quaternary structure, part of the 30S ribosomal subunit. Forms a tight complex with proteins S10 and S14.

Functionally, binds the lower part of the 30S subunit head. Binds mRNA in the 70S ribosome, positioning it for translation. In Corynebacterium kroppenstedtii (strain DSM 44385 / JCM 11950 / CIP 105744 / CCUG 35717), this protein is Small ribosomal subunit protein uS3.